Reading from the N-terminus, the 137-residue chain is Phosphatidylinositol N-acetylglucosaminyltransferase subunit P (137 aa).

A run of 2 helical transmembrane segments spans residues 16 to 36 and 58 to 78; these read VYGF…LIWG and MAMP…YIGL.

Belongs to the PIGP family.

The protein localises to the membrane. It carries out the reaction a 1,2-diacyl-sn-glycero-3-phospho-(1D-myo-inositol) + UDP-N-acetyl-alpha-D-glucosamine = a 6-(N-acetyl-alpha-D-glucosaminyl)-1-(1,2-diacyl-sn-glycero-3-phospho)-1D-myo-inositol + UDP + H(+). Its pathway is glycolipid biosynthesis; glycosylphosphatidylinositol-anchor biosynthesis. Functionally, part of the complex catalyzing the transfer of N-acetylglucosamine from UDP-N-acetylglucosamine to phosphatidylinositol, the first step of GPI biosynthesis. This Arabidopsis thaliana (Mouse-ear cress) protein is Phosphatidylinositol N-acetylglucosaminyltransferase subunit P.